Consider the following 248-residue polypeptide: MILFPAIDLKGGQCVRLKLGDMQQATVYNTDPAAQARSFEDQGFEWLHVVDLDGAFAGHSANGDAVEAILKATDNPVQLGGGIRTLDHIEAWLSRGLRRVILGTVAVRNPDLVIEACRKFPDHVAVGIDAKGGKVAVEGWAEASELGIIELARKFEGAGVAAIIYTDIDRDGILAGINWSSTLELADAVSIPVIASGGLASLDDIRRMLEPDARKLEGAISGRALYDGRIDPKEALALIKAARAKETA.

Catalysis depends on Asp-8, which acts as the Proton acceptor. The Proton donor role is filled by Asp-129.

It belongs to the HisA/HisF family.

The protein resides in the cytoplasm. It catalyses the reaction 1-(5-phospho-beta-D-ribosyl)-5-[(5-phospho-beta-D-ribosylamino)methylideneamino]imidazole-4-carboxamide = 5-[(5-phospho-1-deoxy-D-ribulos-1-ylimino)methylamino]-1-(5-phospho-beta-D-ribosyl)imidazole-4-carboxamide. It participates in amino-acid biosynthesis; L-histidine biosynthesis; L-histidine from 5-phospho-alpha-D-ribose 1-diphosphate: step 4/9. The sequence is that of 1-(5-phosphoribosyl)-5-[(5-phosphoribosylamino)methylideneamino] imidazole-4-carboxamide isomerase from Rhizobium johnstonii (strain DSM 114642 / LMG 32736 / 3841) (Rhizobium leguminosarum bv. viciae).